A 587-amino-acid chain; its full sequence is Probable pectinesterase/pectinesterase inhibitor 61 (587 aa).

The segment at 1–23 (MGYDRLGPSGPSNPNQKDPATSL) is disordered. The span at 10-19 (GPSNPNQKDP) shows a compositional bias: polar residues. The chain crosses the membrane as a helical span at residues 35 to 55 (ILFTLAVLVVGVVCFGIFAGI). The pectinesterase inhibitor 61 stretch occupies residues 69–223 (RKPTQAISRT…SEMVSNCLAI (155 aa)). The segment at 273 to 571 (DITVSKDGSG…FTVAQFISGS (299 aa)) is pectinesterase 61. Residues T349 and Q379 each contribute to the substrate site. The Proton donor; for pectinesterase activity role is filled by D402. An intrachain disulfide couples C416 to C436. Catalysis depends on D423, which acts as the Nucleophile; for pectinesterase activity. R491 and W493 together coordinate substrate.

The protein in the N-terminal section; belongs to the PMEI family. In the C-terminal section; belongs to the pectinesterase family. As to expression, expressed in siliques, floral stems and rosettes leaves.

It is found in the membrane. The catalysed reaction is [(1-&gt;4)-alpha-D-galacturonosyl methyl ester](n) + n H2O = [(1-&gt;4)-alpha-D-galacturonosyl](n) + n methanol + n H(+). Its pathway is glycan metabolism; pectin degradation; 2-dehydro-3-deoxy-D-gluconate from pectin: step 1/5. Functionally, acts in the modification of cell walls via demethylesterification of cell wall pectin. The sequence is that of Probable pectinesterase/pectinesterase inhibitor 61 (PME61) from Arabidopsis thaliana (Mouse-ear cress).